A 1907-amino-acid polypeptide reads, in one-letter code: MAPTWRPSVVSVVGPVGLFLVLLARGCLAEEPPRFIREPKDQIGVSGGVASFVCQATGDPKPRVTWNKKGKKVNSQRFETIDFDESSGAVLRIQPLRTPRDENVYECVAQNSVGEITVHAKLTVLREDQLPPGFPNIDMGPQLKVVERTRTATMLCAASGNPDPEITWFKDFLPVDPSASNGRIKQLRSGALQIESSEETDQGKYECVATNSAGVRYSSPANLYVRVRRVAPRFSILPMSHEIMPGGNVNITCVAVGSPMPYVKWMQGAEDLTPEDDMPVGRNVLELTDVKDSANYTCVAMSSLGVIEAVAQITVKSLPKAPGTPVVTENTATSITVTWDSGNPDPVSYYVIEYKSKSQDGPYQIKEDITTTRYSIGGLSPNSEYEIWVSAVNSIGQGPPSESVVTRTGEQAPASAPRNVQARMLSATTMIVQWEEPVEPNGLIRGYRVYYTMEPEHPVGNWQKHNVDDSLLTTVGSLLEDETYTVRVLAFTSVGDGPLSDPIQVKTQQGVPGQPMNLRAEAKSETSIGLSWSAPRQESVIKYELLFREGDRGREVGRTFDPTTAFVVEDLKPNTEYAFRLAARSPQGLGAFTAVVRQRTLQAKPSAPPQDVKCTSLRSTAILVSWRPPPPETHNGALVGYSVRYRPLGSEDPDPKEVNNIPPTTTQILLEALEKWTEYRVTAVAYTEVGPGPESSPVVVRTDEDVPSAPPRKVEAEALNATAIRVLWRSPTPGRQHGQIRGYQVHYVRMEGAEARGPPRIKDIMLADAQEMVITNLQPETAYSITVAAYTMKGDGARSKPKVVVTKGAVLGRPTLSVQQTPEGSLLARWEPPADAAEDPVLGYRLQFGREDAAPATLELAAWERRFAAPAHKGATYVFRLAARGRAGLGEEASAALSIPEDAPRGFPQILGAAGNVSAGSVILRWLPPVPAERNGAIIKYTVSVREAGAPGPATETELAAAAQPGAETALTLQGLRPETAYELRVRAHTRRGPGPFSPPLRYRLARDPVSPKNFKVKMIMKTSVLLSWEFPDNYNSPTPYKIQYNGLTLDVDGRTTKKLITHLKPHTFYNFVLTNRGSSLGGLQQTVTARTAFNMLSGKPSVAPKPDNDGSIVVYLPDGQSPVTVQNYFIVMVPLRKSRGGQFPILLGSPEDMDLEELIQDLSRLQRRSLRHSRQLEVPRPYIAARFSILPAVFHPGNQKQYGGFDNRGLEPGHRYVLFVLAVLQKNEPTFAASPFSDPFQLDNPDPQPIVDGEEGLIWVIGPVLAVVFIICIVIAILLYKNKPDSKRKDSEPRTKCLLNNADLAPHHPKDPVEMRRINFQTPGMLSHPPIPITDMAEHMERLKANDSLKLSQEYESIDPGQQFTWEHSNLEANKPKNRYANVIAYDHSRVILQPLEGIMGSDYINANYVDGYRRQNAYIATQGPLPETFGDFWRMVWEQRSATVVMMTRLEEKSRVKCDQYWPNRGTETYGFIQVTLLDTMELATFCVRTFSLHKNGSSEKREVRHFQFTAWPDHGVPEYPTPFLAFLRRVKTCNPPDAGPVVVHCSAGVGRTGCFIVIDAMLERIRTEKTVDVYGHVTLMRSQRNYMVQTEDQYSFIHEALLEAVGCGNTEVPARSLYTYIQKLAQVEPGEHVTGMELEFKRLASSKAHTSRFITASLPCNKFKNRLVNILPYESSRVCLQPIRGVEGSDYINASFIDGYRQQKAYIATQGPLAETTEDFWRALWENNSTIVVMLTKLREMGREKCHQYWPAERSARYQYFVVDPMAEYNMPQYILREFKVTDARDGQSRTVRQFQFTDWPEQGAPKSGEGFIDFIGQVHKTKEQFGQDGPISVHCSAGVGRTGVFITLSIVLERMRYEGVVDIFQTVKVLRTQRPAMVQTEDEYQFCFQAALEYLGSFDHYAT.

Residues 1–29 (MAPTWRPSVVSVVGPVGLFLVLLARGCLA) form the signal peptide. Over 30-1257 (EEPPRFIREP…PQPIVDGEEG (1228 aa)) the chain is Extracellular. 3 Ig-like C2-type domains span residues 33-123 (PRFI…AKLT), 135-224 (PNID…ANLY), and 232-314 (PRFS…AQIT). Intrachain disulfides connect Cys54/Cys107 and Cys156/Cys207. Residues 68 to 72 (KKGKK) are important for binding to glycosaminoglycan chains. N-linked (GlcNAc...) asparagine glycans are attached at residues Asn250 and Asn295. Cys253 and Cys298 are oxidised to a cystine. Fibronectin type-III domains lie at 321–411 (APGT…TGEQ), 416–510 (APRN…TQQG), 514–603 (QPMN…TLQA), 608–705 (PPQD…TDED), 710–809 (PPRK…TKGA), 810–906 (VLGR…APRG), 907–1008 (FPQI…LARD), and 1011–1095 (SPKN…TAFN). Residues 691 to 700 (PGPESSPVVV) show a composition bias toward low complexity. Residues 691-711 (PGPESSPVVVRTDEDVPSAPP) form a disordered region. Residue Asn720 is glycosylated (N-linked (GlcNAc...) asparagine). A glycan (N-linked (GlcNAc...) asparagine) is linked at Asn916. Residues 1258-1278 (LIWVIGPVLAVVFIICIVIAI) traverse the membrane as a helical segment. At 1279 to 1907 (LLYKNKPDSK…YLGSFDHYAT (629 aa)) the chain is on the cytoplasmic side. Basic and acidic residues predominate over residues 1286–1296 (DSKRKDSEPRT). Positions 1286-1313 (DSKRKDSEPRTKCLLNNADLAPHHPKDP) are disordered. Tyrosine-protein phosphatase domains follow at residues 1352–1607 (LSQE…LLEA) and 1639–1898 (MELE…ALEY). Residues Asp1516, 1548–1554 (CSAGVGR), and Gln1592 contribute to the substrate site. Cys1548 serves as the catalytic Phosphocysteine intermediate. The active-site Phosphocysteine intermediate is Cys1839.

Belongs to the protein-tyrosine phosphatase family. Receptor class 2A subfamily. Binding to large heparan sulfate proteoglycan structures promotes oligomerization. Binding to chondroitin sulfate proteoglycan does not lead to oligomerization. Interacts (via Ig-like domains) with NTRK1 and NTRK3, but does not form detectable complexes with NTRK2. Interacts with PPFIA1, PPFIA2 and PPFIA3. A cleavage occurs, separating the extracellular domain from the transmembrane segment. This process called 'ectodomain shedding' is thought to be involved in receptor desensitization, signal transduction and/or membrane localization. Detected in brain neocortex (at protein level). Detected in heart, testis and liver. Detected at lower levels in skeletal muscle, brain, spleen and kidney.

The protein localises to the cell membrane. Its subcellular location is the cell projection. It is found in the axon. It localises to the perikaryon. The protein resides in the cytoplasmic vesicle. The protein localises to the secretory vesicle. Its subcellular location is the synaptic vesicle membrane. It is found in the synapse. It localises to the synaptosome. The protein resides in the postsynaptic density. The protein localises to the neuron projection. Its subcellular location is the growth cone. The catalysed reaction is O-phospho-L-tyrosyl-[protein] + H2O = L-tyrosyl-[protein] + phosphate. Functionally, cell surface receptor that binds to glycosaminoglycans, including chondroitin sulfate proteoglycans and heparan sulfate proteoglycans. Binding to chondroitin sulfate and heparan sulfate proteoglycans has opposite effects on PTPRS oligomerization and regulation of neurite outgrowth. Contributes to the inhibition of neurite and axonal outgrowth by chondroitin sulfate proteoglycans, also after nerve transection. Plays a role in stimulating neurite outgrowth in response to the heparan sulfate proteoglycan GPC2. Required for normal brain development, especially for normal development of the pituitary gland and the olfactory bulb. Functions as tyrosine phosphatase. Mediates dephosphorylation of NTRK1, NTRK2 and NTRK3. Plays a role in down-regulation of signaling cascades that lead to the activation of Akt and MAP kinases. Down-regulates TLR9-mediated activation of NF-kappa-B, as well as production of TNF, interferon alpha and interferon beta. This chain is Receptor-type tyrosine-protein phosphatase S (Ptprs), found in Rattus norvegicus (Rat).